The chain runs to 154 residues: 6,7-dimethyl-8-ribityllumazine synthase (154 aa).

Residues Phe-23, 57–59 (AFE), and 81–83 (AVI) each bind 5-amino-6-(D-ribitylamino)uracil. 86–87 (AT) serves as a coordination point for (2S)-2-hydroxy-3-oxobutyl phosphate. His-89 (proton donor) is an active-site residue. Phe-114 provides a ligand contact to 5-amino-6-(D-ribitylamino)uracil. Arg-128 is a binding site for (2S)-2-hydroxy-3-oxobutyl phosphate.

The protein belongs to the DMRL synthase family.

It catalyses the reaction (2S)-2-hydroxy-3-oxobutyl phosphate + 5-amino-6-(D-ribitylamino)uracil = 6,7-dimethyl-8-(1-D-ribityl)lumazine + phosphate + 2 H2O + H(+). It participates in cofactor biosynthesis; riboflavin biosynthesis; riboflavin from 2-hydroxy-3-oxobutyl phosphate and 5-amino-6-(D-ribitylamino)uracil: step 1/2. Its function is as follows. Catalyzes the formation of 6,7-dimethyl-8-ribityllumazine by condensation of 5-amino-6-(D-ribitylamino)uracil with 3,4-dihydroxy-2-butanone 4-phosphate. This is the penultimate step in the biosynthesis of riboflavin. This is 6,7-dimethyl-8-ribityllumazine synthase from Syntrophus aciditrophicus (strain SB).